We begin with the raw amino-acid sequence, 308 residues long: Aspartate carbamoyltransferase catalytic subunit (308 aa).

Positions 55 and 56 each coordinate carbamoyl phosphate. K83 contacts L-aspartate. R105, H133, and Q136 together coordinate carbamoyl phosphate. L-aspartate contacts are provided by R166 and R220. 2 residues coordinate carbamoyl phosphate: G261 and P262.

The protein belongs to the aspartate/ornithine carbamoyltransferase superfamily. ATCase family. In terms of assembly, heterododecamer (2C3:3R2) of six catalytic PyrB chains organized as two trimers (C3), and six regulatory PyrI chains organized as three dimers (R2).

The enzyme catalyses carbamoyl phosphate + L-aspartate = N-carbamoyl-L-aspartate + phosphate + H(+). It participates in pyrimidine metabolism; UMP biosynthesis via de novo pathway; (S)-dihydroorotate from bicarbonate: step 2/3. Its function is as follows. Catalyzes the condensation of carbamoyl phosphate and aspartate to form carbamoyl aspartate and inorganic phosphate, the committed step in the de novo pyrimidine nucleotide biosynthesis pathway. The polypeptide is Aspartate carbamoyltransferase catalytic subunit (Chlorobium phaeobacteroides (strain DSM 266 / SMG 266 / 2430)).